A 656-amino-acid chain; its full sequence is CoB--CoM heterodisulfide reductase iron-sulfur subunit A 2 (656 aa).

Residue 152 to 175 (GGGVSGIQAALDLADMGFEVILVE) coordinates FAD. 4Fe-4S ferredoxin-type domains lie at 238–269 (KKPR…FDEG), 286–315 (SVFT…FDQE), 577–606 (IVSE…LVEK), and 610–639 (LVAE…QNHF). Positions 248, 251, 254, 258, 295, 298, 301, 305, 586, 589, 592, 596, 619, 622, 625, and 629 each coordinate [4Fe-4S] cluster.

Belongs to the HdrA family. The ferredoxin:CoB-CoM heterodisulfide reductase is composed of three subunits; HdrA, HdrB and HdrC. Requires [4Fe-4S] cluster as cofactor. FAD serves as cofactor.

Its pathway is cofactor metabolism; coenzyme M-coenzyme B heterodisulfide reduction; coenzyme B and coenzyme M from coenzyme M-coenzyme B heterodisulfide: step 1/1. Part of a complex that catalyzes the reversible reduction of CoM-S-S-CoB to the thiol-coenzymes H-S-CoM (coenzyme M) and H-S-CoB (coenzyme B). In Methanopyrus kandleri (strain AV19 / DSM 6324 / JCM 9639 / NBRC 100938), this protein is CoB--CoM heterodisulfide reductase iron-sulfur subunit A 2 (hdrA2).